A 451-amino-acid chain; its full sequence is Phosphoglucosamine mutase (451 aa).

Serine 101 (phosphoserine intermediate) is an active-site residue. Residues serine 101, aspartate 240, aspartate 242, and aspartate 244 each contribute to the Mg(2+) site. Serine 101 carries the phosphoserine modification.

It belongs to the phosphohexose mutase family. It depends on Mg(2+) as a cofactor. In terms of processing, activated by phosphorylation.

It carries out the reaction alpha-D-glucosamine 1-phosphate = D-glucosamine 6-phosphate. In terms of biological role, catalyzes the conversion of glucosamine-6-phosphate to glucosamine-1-phosphate. The chain is Phosphoglucosamine mutase from Thioalkalivibrio sulfidiphilus (strain HL-EbGR7).